A 165-amino-acid chain; its full sequence is Thiol peroxidase (165 aa).

One can recognise a Thioredoxin domain in the interval 18 to 165 (PAVGSPAPAF…YEAALAALGA (148 aa)). The active-site Cysteine sulfenic acid (-SOH) intermediate is the C60. A disulfide bond links C60 and C93.

This sequence belongs to the peroxiredoxin family. Tpx subfamily. In terms of assembly, homodimer.

The enzyme catalyses a hydroperoxide + [thioredoxin]-dithiol = an alcohol + [thioredoxin]-disulfide + H2O. In terms of biological role, thiol-specific peroxidase that catalyzes the reduction of hydrogen peroxide and organic hydroperoxides to water and alcohols, respectively. Plays a role in cell protection against oxidative stress by detoxifying peroxides. The sequence is that of Thiol peroxidase from Mycobacterium bovis (strain ATCC BAA-935 / AF2122/97).